An 866-amino-acid polypeptide reads, in one-letter code: Coiled-coil domain-containing protein 178 (866 aa).

The disordered stretch occupies residues 1-21; sequence MPENEKEPAQPTTNEDALDTG. 6 coiled-coil regions span residues 157–266, 292–403, 439–480, 514–539, 570–631, and 665–705; these read ELKK…DYMA, EVME…DQYC, KDLT…EEEV, KTEE…LKKL, RRQV…LLKK, and EKCI…REHV.

This chain is Coiled-coil domain-containing protein 178 (Ccdc178), found in Mus musculus (Mouse).